Here is a 227-residue protein sequence, read N- to C-terminus: Translation initiation factor 6 (227 aa).

It belongs to the eIF-6 family.

Functionally, binds to the 50S ribosomal subunit and prevents its association with the 30S ribosomal subunit to form the 70S initiation complex. This is Translation initiation factor 6 from Methanococcus maripaludis (strain DSM 14266 / JCM 13030 / NBRC 101832 / S2 / LL).